The sequence spans 535 residues: Light-independent protochlorophyllide reductase subunit B (535 aa).

[4Fe-4S] cluster is bound at residue aspartate 36. Residue aspartate 287 is the Proton donor of the active site. 422–423 (GL) contacts substrate.

It belongs to the ChlB/BchB/BchZ family. In terms of assembly, protochlorophyllide reductase is composed of three subunits; BchL, BchN and BchB. Forms a heterotetramer of two BchB and two BchN subunits. [4Fe-4S] cluster serves as cofactor.

The enzyme catalyses chlorophyllide a + oxidized 2[4Fe-4S]-[ferredoxin] + 2 ADP + 2 phosphate = protochlorophyllide a + reduced 2[4Fe-4S]-[ferredoxin] + 2 ATP + 2 H2O. It functions in the pathway porphyrin-containing compound metabolism; bacteriochlorophyll biosynthesis (light-independent). Functionally, component of the dark-operative protochlorophyllide reductase (DPOR) that uses Mg-ATP and reduced ferredoxin to reduce ring D of protochlorophyllide (Pchlide) to form chlorophyllide a (Chlide). This reaction is light-independent. The NB-protein (BchN-BchB) is the catalytic component of the complex. This chain is Light-independent protochlorophyllide reductase subunit B, found in Rhodopseudomonas palustris (strain BisB5).